The following is a 685-amino-acid chain: Stromal interaction molecule 1 (685 aa).

The signal sequence occupies residues 1-22; that stretch reads MDVCARLALWLLWGLLLHQGQS. The Extracellular segment spans residues 23 to 213; it reads LSHSHSEKNT…LLTRHNHLKD (191 aa). Residues 24–43 form a disordered region; sequence SHSHSEKNTGASSGATSEES. Residues 32-41 are compositionally biased toward low complexity; that stretch reads TGASSGATSE. 2 EF-hand domains span residues 64-97 and 102-126; these read SFEA…EDLN and TVKH…AWKS. Ca(2+)-binding residues include aspartate 76, aspartate 78, asparagine 80, aspartate 82, and glutamate 87. Asparagine 131 and asparagine 171 each carry an N-linked (GlcNAc...) asparagine glycan. The SAM domain occupies 132–200; it reads WTVDEVIQWL…QLKALDTVLF (69 aa). The helical transmembrane segment at 214-234 threads the bilayer; that stretch reads FMLVVSIVIGVGGCWFAYIQN. Residues 235-685 lie on the Cytoplasmic side of the membrane; the sequence is RYSKEHMKKM…LKIFKKPLKK (451 aa). The stretch at 248–442 forms a coiled coil; the sequence is LEGLHRAEQS…IEILCGFQIV (195 aa). Serine 257 is subject to Phosphoserine. The segment at 344 to 442 is SOAR/CAD; sequence PEALQKWLQL…IEILCGFQIV (99 aa). The tract at residues 475–483 is contributes to fast Ca(2+)-dependent inactivation of CRAC channels; that stretch reads DDVDDMDEE. A compositionally biased stretch (low complexity) spans 490–499; that stretch reads MQSPSLQSSV. The disordered stretch occupies residues 490-541; the sequence is MQSPSLQSSVRQRLTEPQLGLGSQRDLTHSDSESSLHMSDRQRVAPKPPQMG. Threonine 504 is modified (phosphothreonine). At serine 512 the chain carries Phosphoserine. Positions 515 to 532 are enriched in basic and acidic residues; the sequence is DLTHSDSESSLHMSDRQR. Threonine 517 is subject to Phosphothreonine. Serine 519, serine 521, serine 523, serine 524, serine 567, serine 575, serine 602, serine 608, serine 618, serine 621, and serine 628 each carry phosphoserine. The disordered stretch occupies residues 596 to 685; that stretch reads LMELNPSVPP…LKIFKKPLKK (90 aa). Positions 608–620 are enriched in low complexity; the sequence is SPLLDSSHSLSPS. The Microtubule tip localization signal motif lies at 642-645; the sequence is TRIP. Over residues 655–666 the composition is skewed to acidic residues; that stretch reads EEDNGSIGEETD. Serine 660 bears the Phosphoserine mark. Residue threonine 665 is modified to Phosphothreonine. Residue serine 668 is modified to Phosphoserine. Residues 670–685 show a composition bias toward basic residues; sequence GRKKFPLKIFKKPLKK. Positions 672–685 are required for generation of inwardly rectifying CRAC currents; sequence KKFPLKIFKKPLKK.

Monomer in the presence of Ca(2+). It oligomerizes in absence of Ca(2+). Forms homooligomers and heterooligomers with STIM2. Interacts with pore-forming subunits of CRAC channels, ORAI1, ORAI2 and ORAI3; this interaction is potentiated upon Ca(2+) store depletion. Interacts (via the transmembrane region and the SOAR/CAD domain) with SPPL3; the interaction promotes the binding of STIM1 to ORAI1. Interacts with ORAI1. Interacts with MAPRE1; probably required for targeting to the growing microtubule plus ends. Interacts with CRACR2A/EFCAB4B; the interaction is direct and takes place in absence of Ca(2+). Forms a complex with CRACR2A/EFCAB4B and ORAI1 at low concentration of Ca(2+), the complex dissociates at elevated Ca(2+) concentrations. Interacts with SARAF, promoting a slow inactivation of STIM1-dependent SOCE activity, possibly by facilitating the deoligomerization of STIM1. Interacts with EFHB; the interaction takes place upon Ca(2+)-store depletion and inhibits the association with SARAF. Interacts with ASPH. Interacts with SLC35G1; intracellular Ca(2+)-dependent. May interact with ATP1A1, ATP2A2, ATP2B1, ATP2B4, KPNB1 and XPO1; through SLC35G1. Interacts with STIMATE, promoting STIM1 conformational switch. Interacts with TMEM178A. Interacts with CASQ1 (via C-terminal end and preferentially with the monomeric form); this interaction increases in response to a depletion of intracellular Ca(2+), decreases both STIM1 aggregation and clustering, interaction of STIM1 with ORAI1 and store-operated Ca(2+) entry (SOCE) activity. Interacts with ADCY8. Interacts with TMEM203. In terms of processing, glycosylation is required for cell surface expression. Phosphorylated predominantly on Ser residues. In terms of tissue distribution, expressed in maturation-stage ameloblasts (at protein level). Expressed in all tissues examined and in many cell types, including bone marrow stroma, fibroblast, B-cell precursors, lymphoma and erythroleukemia.

It is found in the cell membrane. The protein resides in the endoplasmic reticulum membrane. It localises to the sarcoplasmic reticulum. Its subcellular location is the cytoplasm. The protein localises to the cytoskeleton. Functionally, acts as a Ca(2+) sensor that gates two major inward rectifying Ca(2+) channels at the plasma membrane: Ca(2+) release-activated Ca(2+) (CRAC) channels and arachidonate-regulated Ca(2+)-selective (ARC) channels. Plays a role in mediating store-operated Ca(2+) entry (SOCE), a Ca(2+) influx following depletion of intracellular Ca(2+) stores. Upon Ca(2+) depletion, translocates from the endoplasmic reticulum to the plasma membrane where it activates CRAC channel pore-forming subunits ORA1, ORA2 and ORAI3 to generate sustained and oscillatory Ca(2+) entry. Involved in enamel formation. The sequence is that of Stromal interaction molecule 1 (Stim1) from Mus musculus (Mouse).